We begin with the raw amino-acid sequence, 221 residues long: Small ribosomal subunit protein uS5 (221 aa).

Positions 1–40 (MMAQRNSGAPDNAGGSNDGREGGRGRRDNRDDRRGGRDNA) are disordered. A compositionally biased stretch (basic and acidic residues) spans 18 to 40 (DGREGGRGRRDNRDDRRGGRDNA). Positions 45 to 108 (YLERVVTINR…DEARKNFFRV (64 aa)) constitute an S5 DRBM domain.

It belongs to the universal ribosomal protein uS5 family. Part of the 30S ribosomal subunit. Contacts proteins S4 and S8.

Functionally, with S4 and S12 plays an important role in translational accuracy. In terms of biological role, located at the back of the 30S subunit body where it stabilizes the conformation of the head with respect to the body. The chain is Small ribosomal subunit protein uS5 from Mycobacteroides abscessus (strain ATCC 19977 / DSM 44196 / CCUG 20993 / CIP 104536 / JCM 13569 / NCTC 13031 / TMC 1543 / L948) (Mycobacterium abscessus).